We begin with the raw amino-acid sequence, 184 residues long: H(2)/formate:CoB-CoM heterodisulfide,ferredoxin reductase subunit C2 (184 aa).

4Fe-4S ferredoxin-type domains are found at residues 24-54 (GEKEVASLKSCYQCGTCTGSCPSGRRTAYRT) and 65-97 (IDSVLDSDDIWKCTTCYTCYERCPRDVKVTEII). The [4Fe-4S] cluster site is built by C34, C37, C40, C44, C77, C80, C83, and C87.

Belongs to the HdrC family. As to quaternary structure, the heterodisulfide reductase is composed of three subunits; HdrA, HdrB and HdrC. B1 and B2 subunits are interchangeable, as are the C1 and C2 subunits. The heterodisulfide reductase forms a supercomplex with formylmethanofuran dehydrogenase (Fwd), F(420)-non-reducing hydrogenase (Vhu) and formate dehydrogenase (Fdh). [4Fe-4S] cluster serves as cofactor.

It carries out the reaction coenzyme B + coenzyme M + 2 reduced [2Fe-2S]-[ferredoxin] + 2 H(+) = coenzyme M-coenzyme B heterodisulfide + 2 H2 + 2 oxidized [2Fe-2S]-[ferredoxin]. It catalyses the reaction coenzyme B + coenzyme M + 2 reduced [2Fe-2S]-[ferredoxin] + 2 CO2 = coenzyme M-coenzyme B heterodisulfide + 2 formate + 2 oxidized [2Fe-2S]-[ferredoxin]. The protein operates within cofactor metabolism; coenzyme M-coenzyme B heterodisulfide reduction; coenzyme B and coenzyme M from coenzyme M-coenzyme B heterodisulfide: step 1/1. Its function is as follows. Part of a complex that catalyzes the reversible reduction of CoM-S-S-CoB to the thiol-coenzymes H-S-CoM (coenzyme M) and H-S-CoB (coenzyme B). This chain is H(2)/formate:CoB-CoM heterodisulfide,ferredoxin reductase subunit C2, found in Methanococcus maripaludis (strain DSM 14266 / JCM 13030 / NBRC 101832 / S2 / LL).